The following is a 130-amino-acid chain: Small ribosomal subunit protein uS8 (130 aa).

It belongs to the universal ribosomal protein uS8 family. In terms of assembly, part of the 30S ribosomal subunit.

Its function is as follows. One of the primary rRNA binding proteins, it binds directly to 16S rRNA central domain where it helps coordinate assembly of the platform of the 30S subunit. The protein is Small ribosomal subunit protein uS8 of Thermococcus kodakarensis (strain ATCC BAA-918 / JCM 12380 / KOD1) (Pyrococcus kodakaraensis (strain KOD1)).